The following is a 171-amino-acid chain: 16S rRNA aminocarboxypropyltransferase (171 aa).

Positions 18, 68, 91, and 110 each coordinate S-adenosyl-L-methionine.

The protein belongs to the TDD superfamily. TSR3 family.

The protein localises to the cytoplasm. The enzyme catalyses an N(1)-methylpseudouridine in rRNA + S-adenosyl-L-methionine = N(1)-methyl-N(3)-[(3S)-3-amino-3-carboxypropyl]pseudouridine in rRNA + S-methyl-5'-thioadenosine + H(+). Aminocarboxypropyltransferase that catalyzes the aminocarboxypropyl transfer on pseudouridine corresponding to position 914 in M.jannaschii 16S rRNA. It constitutes the last step in biosynthesis of the hypermodified N1-methyl-N3-(3-amino-3-carboxypropyl) pseudouridine (m1acp3-Psi). This is 16S rRNA aminocarboxypropyltransferase from Methanosphaera stadtmanae (strain ATCC 43021 / DSM 3091 / JCM 11832 / MCB-3).